The primary structure comprises 23 residues: Septenin 2 (23 aa).

Expressed in skin glands.

The protein localises to the secreted. Its function is as follows. May act as an antimicrobial peptide. The sequence is that of Septenin 2 from Osteopilus septentrionalis (Cuban treefrog).